Here is a 577-residue protein sequence, read N- to C-terminus: Scoloptoxin SSD14 (577 aa).

A signal peptide spans Met-1–Ala-25.

As to quaternary structure, heterodimer composed of subunits alpha and beta; probably disulfide-linked. Expressed by the venom gland.

The protein localises to the secreted. Dose-dependently induces human platelet aggregation on both plasma rich platelet and washed platelet (max. response at 3.2 ug/mL) and causes hemolysis against mouse and rabbit erythrocytes (35 and 65% respectively at 5 ug/mL). Does not show hemolytic activity against human erythrocytes (even at 100 ug/mL). In Scolopendra dehaani (Thai centipede), this protein is Scoloptoxin SSD14.